The sequence spans 630 residues: Sodium-dependent serotonin transporter (630 aa).

At 1 to 87 the chain is on the cytoplasmic side; sequence METTALNSQK…ERETWGKKVD (87 aa). Position 47 is a phosphotyrosine (Tyr47). A helical transmembrane segment spans residues 88 to 112; the sequence is FLLSVIGYAVDLGNIWRFPYVCYQN. Residues Gly94, Ala96, Val97, Asp98, and Asn101 each contribute to the Na(+) site. Asp98 serves as a coordination point for serotonin. Over 113-115 the chain is Extracellular; it reads GGG. The helical transmembrane segment at 116–135 threads the bilayer; the sequence is AFLLPYIIMAIFGGIPLFYM. Residues 136-160 are Cytoplasmic-facing; the sequence is ELALGQYHRNGCISIWRKICPIFKG. Tyr142 carries the phosphotyrosine modification. Residues 161 to 186 form a helical membrane-spanning segment; the sequence is IGYTICIIAFYIASYYNTIIAWALYY. Residues 187 to 252 are Extracellular-facing; it reads LISSFTDRLP…KGLQDVGGVS (66 aa). Cys200 and Cys209 form a disulfide bridge. Asn208 and Asn217 each carry an N-linked (GlcNAc...) asparagine glycan. The chain crosses the membrane as a helical span at residues 253–271; sequence WQLTLCIMLIFTIIYFSIW. The Cytoplasmic portion of the chain corresponds to 272–277; that stretch reads KGVKTS. Thr276 is modified (phosphothreonine). The helical transmembrane segment at 278-297 threads the bilayer; the sequence is GKVVWVTATFPYIVLSVLLV. The Extracellular segment spans residues 298-324; the sequence is RGATLPGAWKGVLFYLKPNWQKLLETG. The chain crosses the membrane as a helical span at residues 325 to 347; sequence VWIDAAAQIFFSLGPGFGVLLAF. Ser336 provides a ligand contact to Na(+). The Cytoplasmic segment spans residues 348 to 360; it reads ASYNKFNNNCYQD. Residues 361 to 380 traverse the membrane as a helical segment; that stretch reads ALVTSAVNCMTSFVSGFVIF. Asn368 is a Na(+) binding site. Residues 381-421 lie on the Extracellular side of the membrane; the sequence is TVLGYMAEMRSEDVSEVAKDAGPSLLFITYAEAIANMPAST. Residues 422-443 traverse the membrane as a helical segment; that stretch reads FFAIIFFLMLITLGLDSTFAGL. Na(+) contacts are provided by Leu434, Asp437, and Ser438. Thr439 lines the serotonin pocket. At 444–463 the chain is on the cytoplasmic side; that stretch reads EGVITAVLDEFPHIWAKHRE. The chain crosses the membrane as a helical span at residues 464 to 483; that stretch reads WFVLAVVITCFFGSLTTLTF. Topologically, residues 484–494 are extracellular; the sequence is GGAYVVKLLEE. Residues Glu494 and Tyr495 each coordinate serotonin. Residues 495–516 form a helical membrane-spanning segment; that stretch reads YATGPAVLTVVFIEAIAVSWFY. Over 517–538 the chain is Cytoplasmic; that stretch reads GVTQFCSDVKEMLGFSPGWFWR. A helical transmembrane segment spans residues 539 to 558; it reads ICWVAVSPVFLLFIICSFLM. Serotonin-binding residues include Phe556 and Ser559. At 559–574 the chain is on the extracellular side; sequence SPPQLRLFQYSYPHWS. The helical transmembrane segment at 575-595 threads the bilayer; that stretch reads VILGYCIGTSSVICIPTYITY. Residues 596-630 lie on the Cytoplasmic side of the membrane; that stretch reads RLVTTPGTLKERIIKSITPETPTEIPCGDICLNAV. The interval 616-624 is interaction with RAB4A; that stretch reads TPTEIPCGD.

This sequence belongs to the sodium:neurotransmitter symporter (SNF) (TC 2.A.22) family. SLC6A4 subfamily. Monomer or homooligomer. Interacts (via C-terminus) with SCAMP2; the interaction is direct and retains transporter molecules intracellularly. Interacts with filamentous actin and STX1A. Interacts (via the N-terminus) with STX1A (via the H3 domain); this interaction regulates SLC4A6 channel conductance. Interacts with SEC23A, SEC24C and PATJ. Interacts with NOS1; the interaction may diminish the cell surface localization of SERT in the brain and, correspondingly, reduce serotonin reuptake. Interacts with TGFB1I1. Interacts with ITGAV:ITGB3. Interacts (via C-terminus) with ITGB3; this interaction regulates SLC6A4 trafficking. In terms of processing, phosphorylation at Thr-276 increases 5-HT uptake and is required for cGMP-mediated SERT regulation. As to expression, expressed in the intestinal crypt epithelial cells (at protein level).

The protein localises to the cell membrane. It localises to the endomembrane system. The protein resides in the endosome membrane. It is found in the synapse. Its subcellular location is the cell junction. The protein localises to the focal adhesion. It localises to the cell projection. The protein resides in the neuron projection. It catalyses the reaction serotonin(out) + K(+)(in) + Na(+)(out) + H(+)(in) = serotonin(in) + K(+)(out) + Na(+)(in) + H(+)(out). Functionally, serotonin transporter that cotransports serotonin with one Na(+) ion in exchange for one K(+) ion and possibly one proton in an overall electroneutral transport cycle. Transports serotonin across the plasma membrane from the extracellular compartment to the cytosol thus limiting serotonin intercellular signaling. Essential for serotonin homeostasis in the central nervous system. In the developing somatosensory cortex, acts in glutamatergic neurons to control serotonin uptake and its trophic functions accounting for proper spatial organization of cortical neurons and elaboration of sensory circuits. In the mature cortex, acts primarily in brainstem raphe neurons to mediate serotonin uptake from the synaptic cleft back into the pre-synaptic terminal thus terminating serotonin signaling at the synapse. Modulates mucosal serotonin levels in the gastrointestinal tract through uptake and clearance of serotonin in enterocytes. Required for enteric neurogenesis and gastrointestinal reflexes. Regulates blood serotonin levels by ensuring rapid high affinity uptake of serotonin from plasma to platelets, where it is further stored in dense granules via vesicular monoamine transporters and then released upon stimulation. Mechanistically, the transport cycle starts with an outward-open conformation having Na1(+) and Cl(-) sites occupied. The binding of a second extracellular Na2(+) ion and serotonin substrate leads to structural changes to outward-occluded to inward-occluded to inward-open, where the Na2(+) ion and serotonin are released into the cytosol. Binding of intracellular K(+) ion induces conformational transitions to inward-occluded to outward-open and completes the cycle by releasing K(+) possibly together with a proton bound to Asp-98 into the extracellular compartment. Na1(+) and Cl(-) ions remain bound throughout the transport cycle. Additionally, displays serotonin-induced channel-like conductance for monovalent cations, mainly Na(+) ions. The channel activity is uncoupled from the transport cycle and may contribute to the membrane resting potential or excitability. The sequence is that of Sodium-dependent serotonin transporter (SLC6A4) from Cavia porcellus (Guinea pig).